Consider the following 1939-residue polypeptide: Myosin-1 (1939 aa).

The region spanning aspartate 33–proline 82 is the Myosin N-terminal SH3-like domain. Phosphothreonine occurs at positions 64 and 69. The region spanning aspartate 86–aspartate 782 is the Myosin motor domain. N6,N6,N6-trimethyllysine is present on lysine 130. Glycine 179–threonine 186 is an ATP binding site. Tyrosine 389 carries the phosphotyrosine modification. Residue threonine 419 is modified to Phosphothreonine. A Phosphotyrosine modification is found at tyrosine 424. The tract at residues leucine 659–glutamate 681 is actin-binding. Position 757 is a pros-methylhistidine (histidine 757). Residues lysine 761–glycine 775 are actin-binding. Residues leucine 785 to serine 814 form the IQ domain. Positions leucine 843–glutamate 1939 form a coiled coil. 4 positions are modified to phosphoserine: serine 1092, serine 1096, serine 1162, and serine 1237. Threonine 1241 carries the post-translational modification Phosphothreonine. 2 positions are modified to phosphoserine: serine 1243 and serine 1261. Phosphothreonine is present on residues threonine 1265 and threonine 1286. A phosphoserine mark is found at serine 1288, serine 1292, serine 1303, and serine 1306. Threonine 1467 is modified (phosphothreonine). The residue at position 1474 (serine 1474) is a Phosphoserine. Tyrosine 1492 is subject to Phosphotyrosine. Phosphoserine is present on serine 1495. Threonine 1501 bears the Phosphothreonine mark. Serine 1514 carries the phosphoserine modification. A Phosphothreonine modification is found at threonine 1517. Phosphoserine is present on residues serine 1542, serine 1554, serine 1574, serine 1600, serine 1603, serine 1714, and serine 1726. A phosphothreonine mark is found at threonine 1730 and threonine 1736. Serine 1739 carries the phosphoserine modification.

The protein belongs to the TRAFAC class myosin-kinesin ATPase superfamily. Myosin family. Muscle myosin is a hexameric protein that consists of 2 heavy chain subunits (MHC), 2 alkali light chain subunits (MLC) and 2 regulatory light chain subunits (MLC-2). Interacts with SLC26A5.

Its subcellular location is the cytoplasm. It localises to the myofibril. Its function is as follows. Required for normal hearing. It plays a role in cochlear amplification of auditory stimuli, likely through the positive regulation of prestin (SLC26A5) activity and outer hair cell (OHC) electromotility. In Homo sapiens (Human), this protein is Myosin-1.